We begin with the raw amino-acid sequence, 113 residues long: Hydrogenase maturation factor HypA (113 aa).

H2 contacts Ni(2+). Zn(2+)-binding residues include C73, C76, C89, and C92.

It belongs to the HypA/HybF family.

In terms of biological role, involved in the maturation of [NiFe] hydrogenases. Required for nickel insertion into the metal center of the hydrogenase. The polypeptide is Hydrogenase maturation factor HypA (Chlorobaculum parvum (strain DSM 263 / NCIMB 8327) (Chlorobium vibrioforme subsp. thiosulfatophilum)).